The following is a 108-amino-acid chain: Small ribosomal subunit protein uS10 (108 aa).

This sequence belongs to the universal ribosomal protein uS10 family. In terms of assembly, part of the 30S ribosomal subunit.

Functionally, involved in the binding of tRNA to the ribosomes. The protein is Small ribosomal subunit protein uS10 of Rhodopirellula baltica (strain DSM 10527 / NCIMB 13988 / SH1).